The following is a 7839-amino-acid chain: Nonribosomal peptide synthetase GRA1 (7839 aa).

Residues 1 to 23 (MALLNGKSTLPNGHNSSIESPNG) are compositionally biased toward polar residues. Positions 1 to 26 (MALLNGKSTLPNGHNSSIESPNGYTE) are disordered. Residues 264 to 650 (LASPNSCAVH…LGRIDDQVKI (387 aa)) are adenylation 1. A Carrier 1 domain is found at 793–866 (SAEALVLRQL…LQAEMSEKKK (74 aa)). Ser-827 is modified (O-(pantetheine 4'-phosphoryl)serine). The segment at 916–1332 (DIYPASPLQE…ILSPSDVAQI (417 aa)) is condensation 1. An adenylation 2 region spans residues 1351-1742 (FFTQVKRSPD…QRKDAQLKIR (392 aa)). A Carrier 2 domain is found at 1880–1957 (ELETEAERTM…AMSRQATVSD (78 aa)). Position 1918 is an O-(pantetheine 4'-phosphoryl)serine (Ser-1918). A condensation 2 region spans residues 1997-2413 (DLYPCTPFQE…LISPSDMETI (417 aa)). The segment at 2432 to 2828 (FDRRLSQKHS…GRRDTQLKIR (397 aa)) is adenylation 3. Positions 2963–3040 (IPTTQMEWNL…DLAQAIVLDT (78 aa)) constitute a Carrier 3 domain. Residue Ser-3001 is modified to O-(pantetheine 4'-phosphoryl)serine. Residues 3084-3496 (DIYPCTPLQD…QVDLISDSDH (413 aa)) form a condensation 3 region. Residues 3520-3923 (RLAVSNPDAE…GRRDSQVKLR (404 aa)) are adenylation 4. The Carrier 4 domain maps to 4057–4134 (RPLTEREKDL…DMAAMTTSLS (78 aa)). Residue Ser-4095 is modified to O-(pantetheine 4'-phosphoryl)serine. Residues 4234–4569 (NLEEFVGRQS…MMNPDDAEEI (336 aa)) form a condensation 4 region. The adenylation 5 stretch occupies residues 4591–4982 (HSKGCPDRIA…VSRKDTQVKF (392 aa)). The Carrier 5 domain maps to 5113-5189 (ALSSDEESQL…DMALCMTSAQ (77 aa)). An O-(pantetheine 4'-phosphoryl)serine modification is found at Ser-5150. The tract at residues 5224-5653 (EDIYPCSALQ…VSPSDQAEIL (430 aa)) is condensation 5. The interval 5671-6069 (FESRARLQPS…GRRDTQVKLR (399 aa)) is adenylation 6. In terms of domain architecture, Carrier 6 spans 6207-6282 (FPSSLAEQQM…HMAAIATTFT (76 aa)). Ser-6243 is modified (O-(pantetheine 4'-phosphoryl)serine). A condensation 6 region spans residues 6321–6730 (QDIYPCSALQ…RLADMDLTGP (410 aa)). An adenylation 7 region spans residues 6756 to 7147 (EQRVKSQPDS…LGRKDSQIKL (392 aa)). The Carrier 7 domain maps to 7290–7366 (KAATPNEKTL…DLARVSRQSI (77 aa)). Ser-7327 is modified (O-(pantetheine 4'-phosphoryl)serine). The condensation7 stretch occupies residues 7404–7704 (HDIYPCTQVQ…LDYAKKRASS (301 aa)).

The protein belongs to the NRP synthetase family.

The protein operates within mycotoxin biosynthesis. In terms of biological role, nonribosomal peptide synthetase; part of the gene cluster that mediates the biosynthesis of gramillins A and B, bicyclic lipopeptides that induce cell death in maize leaves but not in wheat leaves. The nonribosomal peptide synthetase GRA1 incorporates respectively a glutamic adic (Glu), a leucine (Leu), a serine (Ser), a hydroxyglutamine (HOGln), a 2-amino decanoic acid, and 2 cysteins (CysB and CysA). The biosynthesis of 2-amino decanoic acid incorporated in gramillins could be initiated by a fatty acid synthase composed of the alpha and beta subunits FGSG_00036 and FGSG_11656. The cytochrome P450 monooxygenase FGSG_15680 could hydroxylate the fatty acid chain. Subsequent oxidation to the ketone by the oxidoreductase FGSG_00048 and transamination by aminotransferase FGSG_00049 could form 2-amino-decanoic acid. On the other hand, FGSG_15680 could also be responsible for the HO-modified glutamine at the gamma-position. Whether hydroxylation occurs on the fully assembled product or on the Gln residue prior to assembly into the gramillins requires further proof. The thioredoxin FGSG_00043 could also be required for the disulfide-bond formation between CysA and CysB. The specific involvement of the remaining proteins from the cluster is more difficult to discern, but could have broader regulatory (FGSG_00040 and FGSG_11657) or enzymatic functions (FGSG_00044 and FGSG_00045). The final C-domain of GRA1 does not possess the expected sequence of a termination CT domain, often implicated in macrocyclization and release of a cyclopeptidein fungal NRPs; and the thioesterase FGSG_00047 may act in concert with the terminal C-domain of GRA1 to catalyze the formation of the macrocyclic anhydride and release of the products. This is Nonribosomal peptide synthetase GRA1 from Gibberella zeae (strain ATCC MYA-4620 / CBS 123657 / FGSC 9075 / NRRL 31084 / PH-1) (Wheat head blight fungus).